We begin with the raw amino-acid sequence, 287 residues long: 4-hydroxybenzoate octaprenyltransferase (287 aa).

8 helical membrane passes run 21-39 (PIGT…WLAA), 95-115 (VLAL…TMNP), 116-136 (LTIG…FMKR), 138-158 (IPIP…MAYA), 161-181 (ANAL…WTIA), 213-233 (IIGA…QLSE), 234-251 (LGSS…LFVY), and 264-284 (CFQA…GVVI).

It belongs to the UbiA prenyltransferase family. Mg(2+) serves as cofactor.

The protein resides in the cell inner membrane. The catalysed reaction is all-trans-octaprenyl diphosphate + 4-hydroxybenzoate = 4-hydroxy-3-(all-trans-octaprenyl)benzoate + diphosphate. The protein operates within cofactor biosynthesis; ubiquinone biosynthesis. Catalyzes the prenylation of para-hydroxybenzoate (PHB) with an all-trans polyprenyl group. Mediates the second step in the final reaction sequence of ubiquinone-8 (UQ-8) biosynthesis, which is the condensation of the polyisoprenoid side chain with PHB, generating the first membrane-bound Q intermediate 3-octaprenyl-4-hydroxybenzoate. The polypeptide is 4-hydroxybenzoate octaprenyltransferase (Aeromonas hydrophila subsp. hydrophila (strain ATCC 7966 / DSM 30187 / BCRC 13018 / CCUG 14551 / JCM 1027 / KCTC 2358 / NCIMB 9240 / NCTC 8049)).